The chain runs to 118 residues: M-zodatoxin-Lt8p (118 aa).

Positions 1–3 (AES) are cleaved as a signal peptide. Residues 4 to 43 (KPAESEHELAEVEEENELADLEDAVWLEHLADLSDLEEAR) constitute a propeptide that is removed on maturation.

It belongs to the cationic peptide 06 (cytoinsectotoxin) family. In terms of tissue distribution, expressed by the venom gland.

It is found in the secreted. In terms of biological role, insecticidal, cytolytic and antimicrobial peptide. Forms voltage-dependent, ion-permeable channels in membranes. At high concentration causes cell membrane lysis. In Lachesana tarabaevi (Spider), this protein is M-zodatoxin-Lt8p (cit 1-15).